We begin with the raw amino-acid sequence, 409 residues long: Tyrosine--tRNA ligase (409 aa).

The 'HIGH' region signature appears at 54–63; the sequence is PTAPDIHLGH. The short motif at 238-242 is the 'KMSKS' region element; the sequence is KMSKS. K241 serves as a coordination point for ATP. One can recognise an S4 RNA-binding domain in the interval 347–407; sequence QGILRILREA…GKRKFARVKL (61 aa).

It belongs to the class-I aminoacyl-tRNA synthetase family. TyrS type 2 subfamily. As to quaternary structure, homodimer.

It localises to the cytoplasm. The catalysed reaction is tRNA(Tyr) + L-tyrosine + ATP = L-tyrosyl-tRNA(Tyr) + AMP + diphosphate + H(+). Functionally, catalyzes the attachment of tyrosine to tRNA(Tyr) in a two-step reaction: tyrosine is first activated by ATP to form Tyr-AMP and then transferred to the acceptor end of tRNA(Tyr). This is Tyrosine--tRNA ligase from Bordetella pertussis (strain Tohama I / ATCC BAA-589 / NCTC 13251).